A 320-amino-acid polypeptide reads, in one-letter code: Aspartate carbamoyltransferase catalytic subunit (320 aa).

Carbamoyl phosphate-binding residues include Arg57 and Thr58. Lys85 serves as a coordination point for L-aspartate. Residues Arg107, His141, and Gln144 each contribute to the carbamoyl phosphate site. Residues Arg174 and Arg228 each coordinate L-aspartate. Carbamoyl phosphate-binding residues include Gly269 and Pro270.

The protein belongs to the aspartate/ornithine carbamoyltransferase superfamily. ATCase family. Heterododecamer (2C3:3R2) of six catalytic PyrB chains organized as two trimers (C3), and six regulatory PyrI chains organized as three dimers (R2).

The enzyme catalyses carbamoyl phosphate + L-aspartate = N-carbamoyl-L-aspartate + phosphate + H(+). It functions in the pathway pyrimidine metabolism; UMP biosynthesis via de novo pathway; (S)-dihydroorotate from bicarbonate: step 2/3. Functionally, catalyzes the condensation of carbamoyl phosphate and aspartate to form carbamoyl aspartate and inorganic phosphate, the committed step in the de novo pyrimidine nucleotide biosynthesis pathway. The polypeptide is Aspartate carbamoyltransferase catalytic subunit (Mycobacterium marinum (strain ATCC BAA-535 / M)).